Reading from the N-terminus, the 356-residue chain is Gluconolactonase (356 aa).

The tat-type signal signal peptide spans 1-35; it reads MTTGRMSRRECLSAAVMVPIAAMTATATITGSAQA.

As to quaternary structure, homodimer. In terms of processing, predicted to be exported by the Tat system. The position of the signal peptide cleavage has been experimentally proven.

The protein localises to the periplasm. It catalyses the reaction D-glucono-1,5-lactone + H2O = D-gluconate + H(+). It participates in carbohydrate acid metabolism; D-gluconate biosynthesis; D-gluconate from D-glucono-1,5-lactone: step 1/1. Functionally, hydrolyzes the gluconolactone formed by glucose-fructose oxidoreductase, and that formed in aerobic conditions by the glucose dehydrogenase present. The sequence is that of Gluconolactonase (gnl) from Zymomonas mobilis subsp. mobilis (strain ATCC 31821 / ZM4 / CP4).